Here is a 209-residue protein sequence, read N- to C-terminus: Uracil phosphoribosyltransferase (209 aa).

5-phospho-alpha-D-ribose 1-diphosphate contacts are provided by residues Arg-79, Arg-104, and 131–139 (DPMLATGGS). Residues Ile-194 and 199–201 (GDA) each bind uracil. Asp-200 is a 5-phospho-alpha-D-ribose 1-diphosphate binding site.

Belongs to the UPRTase family. Mg(2+) is required as a cofactor.

The enzyme catalyses UMP + diphosphate = 5-phospho-alpha-D-ribose 1-diphosphate + uracil. It functions in the pathway pyrimidine metabolism; UMP biosynthesis via salvage pathway; UMP from uracil: step 1/1. With respect to regulation, allosterically activated by GTP. Catalyzes the conversion of uracil and 5-phospho-alpha-D-ribose 1-diphosphate (PRPP) to UMP and diphosphate. This chain is Uracil phosphoribosyltransferase, found in Geobacter sulfurreducens (strain ATCC 51573 / DSM 12127 / PCA).